We begin with the raw amino-acid sequence, 202 residues long: Nucleoside triphosphate pyrophosphatase (202 aa).

The Proton acceptor role is filled by D79.

This sequence belongs to the Maf family. Requires a divalent metal cation as cofactor.

It is found in the cytoplasm. It catalyses the reaction a ribonucleoside 5'-triphosphate + H2O = a ribonucleoside 5'-phosphate + diphosphate + H(+). The catalysed reaction is a 2'-deoxyribonucleoside 5'-triphosphate + H2O = a 2'-deoxyribonucleoside 5'-phosphate + diphosphate + H(+). Functionally, nucleoside triphosphate pyrophosphatase. May have a dual role in cell division arrest and in preventing the incorporation of modified nucleotides into cellular nucleic acids. In Rhodopseudomonas palustris (strain BisB5), this protein is Nucleoside triphosphate pyrophosphatase.